Here is a 218-residue protein sequence, read N- to C-terminus: Ropporin-1-like protein (218 aa).

The RIIa domain occupies 17–54 (PELPDILKQFTKAAIRTQPADVLQWSAGYFSALSRGDP).

The protein belongs to the ropporin family. In terms of assembly, component of the axonemal radial spoke complex 1 (RS1), at least composed of spoke head proteins RSPH1, RSPH3, RSPH9 and the cilia-specific component RSPH4A or sperm-specific component RSPH6A, spoke stalk proteins RSPH14, DNAJB13, DYDC1, ROPN1L and NME5, and the anchor protein IQUB. May interact with AKAP3. Interacts with FSCB; the interaction increases upon spermatozoa capacitation conditions. Interacts with CFAP61. Post-translationally, sumoylated, sumoylation decreases upon spermatozoa capacitation conditions. Testis-specific. Expression is restricted to germ cells.

Its subcellular location is the cell projection. It is found in the cilium. The protein resides in the flagellum. Its function is as follows. Functions as part of axonemal radial spoke complexes that play an important part in the motility of sperm and cilia. Important for male fertility. With ROPN1, involved in fibrous sheath integrity and sperm motility, plays a role in PKA-dependent signaling processes required for spermatozoa capacitation. This chain is Ropporin-1-like protein (Ropn1l), found in Mus musculus (Mouse).